The sequence spans 136 residues: Histone H3.2 (136 aa).

Residues 1–43 (MARTKQTARKSTGGKAPRKQLATKAARKSAPATGGVKKPHRFR) are disordered. Lysine 5 and lysine 10 each carry N6,N6,N6-trimethyllysine; alternate. Residues lysine 5 and lysine 10 each carry the N6,N6-dimethyllysine; alternate modification. Residues lysine 5 and lysine 10 each carry the N6-methyllysine; alternate modification. Lysine 10 is modified (N6-acetyllysine; alternate). The residue at position 11 (serine 11) is a Phosphoserine. Threonine 12 is subject to Phosphothreonine. Lysine 15 is modified (N6-acetyllysine). 3 positions are modified to N6-methyllysine; alternate: lysine 19, lysine 24, and lysine 28. 2 positions are modified to N6-acetyllysine; alternate: lysine 19 and lysine 24. Lysine 28 carries the N6,N6,N6-trimethyllysine; alternate modification. Position 28 is an N6,N6-dimethyllysine; alternate (lysine 28). Phosphoserine is present on serine 29. Position 37 is an N6,N6,N6-trimethyllysine; alternate (lysine 37). Position 37 is an N6,N6-dimethyllysine; alternate (lysine 37). Lysine 37 is subject to N6-methyllysine; alternate.

This sequence belongs to the histone H3 family. In terms of assembly, the nucleosome is a histone octamer containing two molecules each of H2A, H2B, H3 and H4 assembled in one H3-H4 heterotetramer and two H2A-H2B heterodimers. The octamer wraps approximately 147 bp of DNA. In terms of processing, acetylation is generally linked to gene activation. Can be acetylated to form H3K9ac, H3K14ac, H3K18ac and H3K23ac. H3K9ac could compete with H3K9me and prevent gene silencing. H3K9ac is restricted to euchromatin. Post-translationally, methylated to form mainly H3K4me, H3K9me, H3K18me, H3K23me, H3K27me and H3K36me. H3K4me1/2/3, H3K9me3, H3K27me3 and H3K36me1/2/3 are typical marks for euchromatin, whereas heterochromatic chromocenters are enriched in H3K9me1/2 and H3K27me1/2. H2BK143ub1 is probably prerequisite for H3K4me. Can be phosphorylated to form H3S10ph, H3T11ph and H3S28ph.

Its subcellular location is the nucleus. The protein resides in the chromosome. Its function is as follows. Core component of nucleosome. Nucleosomes wrap and compact DNA into chromatin, limiting DNA accessibility to the cellular machineries which require DNA as a template. Histones thereby play a central role in transcription regulation, DNA repair, DNA replication and chromosomal stability. DNA accessibility is regulated via a complex set of post-translational modifications of histones, also called histone code, and nucleosome remodeling. In Brassica napus (Rape), this protein is Histone H3.2.